The following is a 259-amino-acid chain: Deoxyribose-phosphate aldolase (259 aa).

D101 acts as the Proton donor/acceptor in catalysis. Catalysis depends on K166, which acts as the Schiff-base intermediate with acetaldehyde. The Proton donor/acceptor role is filled by K200.

The protein belongs to the DeoC/FbaB aldolase family. DeoC type 2 subfamily.

It localises to the cytoplasm. The catalysed reaction is 2-deoxy-D-ribose 5-phosphate = D-glyceraldehyde 3-phosphate + acetaldehyde. Its pathway is carbohydrate degradation; 2-deoxy-D-ribose 1-phosphate degradation; D-glyceraldehyde 3-phosphate and acetaldehyde from 2-deoxy-alpha-D-ribose 1-phosphate: step 2/2. Catalyzes a reversible aldol reaction between acetaldehyde and D-glyceraldehyde 3-phosphate to generate 2-deoxy-D-ribose 5-phosphate. The protein is Deoxyribose-phosphate aldolase of Glaesserella parasuis serovar 5 (strain SH0165) (Haemophilus parasuis).